The chain runs to 104 residues: Iron-sulfur cluster assembly protein CyaY (104 aa).

It belongs to the frataxin family.

Functionally, involved in iron-sulfur (Fe-S) cluster assembly. May act as a regulator of Fe-S biogenesis. The polypeptide is Iron-sulfur cluster assembly protein CyaY (Vibrio atlanticus (strain LGP32) (Vibrio splendidus (strain Mel32))).